Consider the following 386-residue polypeptide: DNA-directed RNA polymerase subunit Rpo1C (386 aa).

Belongs to the RNA polymerase beta' chain family. As to quaternary structure, part of the RNA polymerase complex.

It is found in the cytoplasm. The catalysed reaction is RNA(n) + a ribonucleoside 5'-triphosphate = RNA(n+1) + diphosphate. DNA-dependent RNA polymerase (RNAP) catalyzes the transcription of DNA into RNA using the four ribonucleoside triphosphates as substrates. Forms part of the jaw domain. This Methanococcus maripaludis (strain DSM 14266 / JCM 13030 / NBRC 101832 / S2 / LL) protein is DNA-directed RNA polymerase subunit Rpo1C.